The primary structure comprises 477 residues: Glycogen synthase (477 aa).

Lysine 15 is a binding site for ADP-alpha-D-glucose.

It belongs to the glycosyltransferase 1 family. Bacterial/plant glycogen synthase subfamily.

It carries out the reaction [(1-&gt;4)-alpha-D-glucosyl](n) + ADP-alpha-D-glucose = [(1-&gt;4)-alpha-D-glucosyl](n+1) + ADP + H(+). It functions in the pathway glycan biosynthesis; glycogen biosynthesis. Synthesizes alpha-1,4-glucan chains using ADP-glucose. The polypeptide is Glycogen synthase (Shigella boydii serotype 18 (strain CDC 3083-94 / BS512)).